The sequence spans 396 residues: S-adenosylmethionine synthase 3 (396 aa).

E13 contributes to the Mg(2+) binding site. H19 is an ATP binding site. K(+) is bound at residue E47. Residues E60 and Q103 each coordinate L-methionine. Residues 171 to 173, 239 to 242, D250, 256 to 257, A273, K277, and K281 each bind ATP; these read DGK, SGRF, and RK. D250 serves as a coordination point for L-methionine. An L-methionine-binding site is contributed by K281.

The protein belongs to the AdoMet synthase family. Homotetramer. Requires Mn(2+) as cofactor. It depends on Mg(2+) as a cofactor. The cofactor is Co(2+). K(+) serves as cofactor. As to expression, expressed in roots, stems and leaves (at protein level).

Its subcellular location is the cytoplasm. The catalysed reaction is L-methionine + ATP + H2O = S-adenosyl-L-methionine + phosphate + diphosphate. It functions in the pathway amino-acid biosynthesis; S-adenosyl-L-methionine biosynthesis; S-adenosyl-L-methionine from L-methionine: step 1/1. Its function is as follows. Catalyzes the formation of S-adenosylmethionine from methionine and ATP. The reaction comprises two steps that are both catalyzed by the same enzyme: formation of S-adenosylmethionine (AdoMet) and triphosphate, and subsequent hydrolysis of the triphosphate. May be involved in the synthesis of betain in response to abiotic stress such as high salinity. The chain is S-adenosylmethionine synthase 3 (SAMS3) from Atriplex nummularia (Old man saltbush).